The primary structure comprises 332 residues: Fructose-1,6-bisphosphatase class 1 (332 aa).

Mg(2+) contacts are provided by E89, D110, L112, and D113. Substrate contacts are provided by residues 113–116, N206, Y239, 257–259, and K269; these read DGSS and YLY. E275 lines the Mg(2+) pocket.

Belongs to the FBPase class 1 family. Homotetramer. It depends on Mg(2+) as a cofactor.

It is found in the cytoplasm. It catalyses the reaction beta-D-fructose 1,6-bisphosphate + H2O = beta-D-fructose 6-phosphate + phosphate. Its pathway is carbohydrate biosynthesis; gluconeogenesis. In Erwinia tasmaniensis (strain DSM 17950 / CFBP 7177 / CIP 109463 / NCPPB 4357 / Et1/99), this protein is Fructose-1,6-bisphosphatase class 1.